We begin with the raw amino-acid sequence, 96 residues long: Co-chaperonin GroES (96 aa).

It belongs to the GroES chaperonin family. As to quaternary structure, heptamer of 7 subunits arranged in a ring. Interacts with the chaperonin GroEL.

It localises to the cytoplasm. Functionally, together with the chaperonin GroEL, plays an essential role in assisting protein folding. The GroEL-GroES system forms a nano-cage that allows encapsulation of the non-native substrate proteins and provides a physical environment optimized to promote and accelerate protein folding. GroES binds to the apical surface of the GroEL ring, thereby capping the opening of the GroEL channel. The protein is Co-chaperonin GroES of Albidiferax ferrireducens (strain ATCC BAA-621 / DSM 15236 / T118) (Rhodoferax ferrireducens).